We begin with the raw amino-acid sequence, 186 residues long: Protein GrpE (186 aa).

The span at 1-22 shows a compositional bias: basic and acidic residues; sequence MSDSNKEKKKKFADMVSKRKGD. Residues 1–35 form a disordered region; it reads MSDSNKEKKKKFADMVSKRKGDDQEDQQTGDLSEE. The span at 23 to 34 shows a compositional bias: acidic residues; it reads DQEDQQTGDLSE.

It belongs to the GrpE family. Homodimer.

The protein resides in the cytoplasm. In terms of biological role, participates actively in the response to hyperosmotic and heat shock by preventing the aggregation of stress-denatured proteins, in association with DnaK and GrpE. It is the nucleotide exchange factor for DnaK and may function as a thermosensor. Unfolded proteins bind initially to DnaJ; upon interaction with the DnaJ-bound protein, DnaK hydrolyzes its bound ATP, resulting in the formation of a stable complex. GrpE releases ADP from DnaK; ATP binding to DnaK triggers the release of the substrate protein, thus completing the reaction cycle. Several rounds of ATP-dependent interactions between DnaJ, DnaK and GrpE are required for fully efficient folding. This Wolbachia pipientis subsp. Culex pipiens (strain wPip) protein is Protein GrpE.